Here is a 193-residue protein sequence, read N- to C-terminus: Acyl-homoserine-lactone synthase (193 aa).

It belongs to the autoinducer synthase family.

The catalysed reaction is a fatty acyl-[ACP] + S-adenosyl-L-methionine = an N-acyl-L-homoserine lactone + S-methyl-5'-thioadenosine + holo-[ACP] + H(+). Functionally, required for the synthesis of OHHL (N-(3-oxohexanoyl)-L-homoserine lactone) also known as VAI or N-(beta-ketocaproyl)homoserine lactone or 3-oxo-N-(tetrahydro-2-oxo-3-furanyl)-hexanamide, an autoinducer molecule which binds to LuxR and thus acts in bioluminescence regulation. The sequence is that of Acyl-homoserine-lactone synthase (luxI) from Aliivibrio fischeri (strain ATCC 700601 / ES114) (Vibrio fischeri).